Consider the following 63-residue polypeptide: Conotoxin TxMRCL-D012 (63 aa).

The first 19 residues, methionine 1 to serine 19, serve as a signal peptide directing secretion. Positions aspartate 20–serine 47 are excised as a propeptide. Residue glutamine 50 is modified to Pyrrolidone carboxylic acid.

Belongs to the conotoxin T superfamily. Contains 2 disulfide bonds that can be either 'C1-C3, C2-C4' or 'C1-C4, C2-C3', since these disulfide connectivities have been observed for conotoxins with cysteine framework V (for examples, see AC P0DQQ7 and AC P81755). In terms of tissue distribution, expressed by the venom duct.

The protein resides in the secreted. The protein is Conotoxin TxMRCL-D012 of Conus textile (Cloth-of-gold cone).